Reading from the N-terminus, the 291-residue chain is uncharacterized protein (291 aa).

The region spanning 191–289 (KQMLNWIHLH…NMTPLSYKKM (99 aa)) is the HTH araC/xylS-type domain. 2 DNA-binding regions (H-T-H motif) span residues 208 to 229 (EDIA…KRML) and 256 to 279 (VTEV…QQAM).

This is an uncharacterized protein from Bacillus subtilis (strain 168).